Reading from the N-terminus, the 1028-residue chain is Protein SMAX1-LIKE 5 (1028 aa).

The 192-residue stretch at 8–199 (IQQTLTTEAA…CVEDCSVSSV (192 aa)) folds into the Clp R domain. 2 repeat regions span residues 12–102 (LTTE…LNRL) and 116–199 (LANA…VSSV). An EAR motif is present at residues 871–875 (LDLNI).

This sequence belongs to the ClpA/ClpB family. Interacts probably with TPL/TPR in an EAR-motif dependent manner. Detected in roots, seedlings and axillary branches.

Its function is as follows. May function in a transcriptional corepressor complex. The sequence is that of Protein SMAX1-LIKE 5 from Arabidopsis thaliana (Mouse-ear cress).